Reading from the N-terminus, the 730-residue chain is Elongation factor 2 (730 aa).

In terms of domain architecture, tr-type G spans 19-260; that stretch reads DRIRNIGIVA…MVVKHLPNPL (242 aa). Residues 28 to 35, 94 to 98, and 148 to 151 contribute to the GTP site; these read AHIDHGKT, DTPGH, and NKVD. His-597 is modified (diphthamide).

The protein belongs to the TRAFAC class translation factor GTPase superfamily. Classic translation factor GTPase family. EF-G/EF-2 subfamily.

The protein resides in the cytoplasm. Functionally, catalyzes the GTP-dependent ribosomal translocation step during translation elongation. During this step, the ribosome changes from the pre-translocational (PRE) to the post-translocational (POST) state as the newly formed A-site-bound peptidyl-tRNA and P-site-bound deacylated tRNA move to the P and E sites, respectively. Catalyzes the coordinated movement of the two tRNA molecules, the mRNA and conformational changes in the ribosome. The polypeptide is Elongation factor 2 (Methanoculleus marisnigri (strain ATCC 35101 / DSM 1498 / JR1)).